The sequence spans 741 residues: Protein lin-54 homolog (741 aa).

The CRC domain maps to 513–626 (PRKPCNCTKS…KCIGCKNFEE (114 aa)). Positions 515 to 528 (KPCNCTKSLCLKLY) are DNA-binding. Residues C517, C519, C524, C529, C531, C538, C541, C543, and C546 each coordinate Zn(2+). Positions 575–588 (IGKGKEGESDRRHS) are linker. Residues C591, C593, C598, C603, C605, C612, C616, C618, and C621 each contribute to the Zn(2+) site. Positions 591 to 604 (CNCKRSGCLKNYCE) are DNA-binding.

This sequence belongs to the lin-54 family. In terms of assembly, component of the DREAM complex.

The protein resides in the nucleus. Functionally, component of the DREAM complex, a multiprotein complex that can both act as a transcription activator or repressor depending on the context. Specifically recognizes the consensus motif 5'-TTYRAA-3' in target DNA. The polypeptide is Protein lin-54 homolog (lin54) (Xenopus tropicalis (Western clawed frog)).